We begin with the raw amino-acid sequence, 244 residues long: Cell division protein ZapD (244 aa).

This sequence belongs to the ZapD family. In terms of assembly, interacts with FtsZ.

It is found in the cytoplasm. In terms of biological role, cell division factor that enhances FtsZ-ring assembly. Directly interacts with FtsZ and promotes bundling of FtsZ protofilaments, with a reduction in FtsZ GTPase activity. This chain is Cell division protein ZapD, found in Shewanella oneidensis (strain ATCC 700550 / JCM 31522 / CIP 106686 / LMG 19005 / NCIMB 14063 / MR-1).